Here is a 71-residue protein sequence, read N- to C-terminus: Sec-independent protein translocase protein TatA (71 aa).

A helical transmembrane segment spans residues 1 to 21 (MGSFSMWHWLIVLAIVLLLFG). Residues 40-71 (KKGMSDDDTAPDGTPKPADQSKTVDHRADDHK) form a disordered region. The span at 61 to 71 (KTVDHRADDHK) shows a compositional bias: basic and acidic residues.

It belongs to the TatA/E family. The Tat system comprises two distinct complexes: a TatABC complex, containing multiple copies of TatA, TatB and TatC subunits, and a separate TatA complex, containing only TatA subunits. Substrates initially bind to the TatABC complex, which probably triggers association of the separate TatA complex to form the active translocon.

It is found in the cell inner membrane. In terms of biological role, part of the twin-arginine translocation (Tat) system that transports large folded proteins containing a characteristic twin-arginine motif in their signal peptide across membranes. TatA could form the protein-conducting channel of the Tat system. This Allorhizobium ampelinum (strain ATCC BAA-846 / DSM 112012 / S4) (Agrobacterium vitis (strain S4)) protein is Sec-independent protein translocase protein TatA.